A 58-amino-acid chain; its full sequence is UPF0391 membrane protein VP0082 (58 aa).

Helical transmembrane passes span 4–24 and 30–50; these read WMFI…SGIA and VAQV…VFVI.

The protein belongs to the UPF0391 family.

Its subcellular location is the cell membrane. The polypeptide is UPF0391 membrane protein VP0082 (Vibrio parahaemolyticus serotype O3:K6 (strain RIMD 2210633)).